A 383-amino-acid polypeptide reads, in one-letter code: Succinyl-diaminopimelate desuccinylase (383 aa).

His-74 contacts Zn(2+). The active site involves Asp-76. Zn(2+) is bound at residue Asp-107. The Proton acceptor role is filled by Glu-141. Residues Glu-142, Glu-170, and His-356 each coordinate Zn(2+).

The protein belongs to the peptidase M20A family. DapE subfamily. In terms of assembly, homodimer. It depends on Zn(2+) as a cofactor. The cofactor is Co(2+).

The enzyme catalyses N-succinyl-(2S,6S)-2,6-diaminopimelate + H2O = (2S,6S)-2,6-diaminopimelate + succinate. Its pathway is amino-acid biosynthesis; L-lysine biosynthesis via DAP pathway; LL-2,6-diaminopimelate from (S)-tetrahydrodipicolinate (succinylase route): step 3/3. Its function is as follows. Catalyzes the hydrolysis of N-succinyl-L,L-diaminopimelic acid (SDAP), forming succinate and LL-2,6-diaminopimelate (DAP), an intermediate involved in the bacterial biosynthesis of lysine and meso-diaminopimelic acid, an essential component of bacterial cell walls. The sequence is that of Succinyl-diaminopimelate desuccinylase from Cupriavidus taiwanensis (strain DSM 17343 / BCRC 17206 / CCUG 44338 / CIP 107171 / LMG 19424 / R1) (Ralstonia taiwanensis (strain LMG 19424)).